Consider the following 824-residue polypeptide: E3 ubiquitin-protein ligase TRIM71 (824 aa).

The RING-type zinc finger occupies C23–D93. The interval S37 to S56 is disordered. The B box-type 1; atypical zinc-finger motif lies at L147–L194. Zn(2+)-binding residues include C152, C155, C176, H180, C234, H237, C257, and H262. Residues E229–L270 form a B box-type 2 zinc finger. The stretch at Q293–K321 forms a coiled coil. The stretch at S435–V536 is one Filamin repeat. 6 NHL repeats span residues M549–C592, H596–D639, L643–D686, L690–D733, A737–N780, and L784–F824.

The protein belongs to the TRIM/RBCC family.

It localises to the cytoplasm. The protein resides in the P-body. It catalyses the reaction S-ubiquitinyl-[E2 ubiquitin-conjugating enzyme]-L-cysteine + [acceptor protein]-L-lysine = [E2 ubiquitin-conjugating enzyme]-L-cysteine + N(6)-ubiquitinyl-[acceptor protein]-L-lysine.. It participates in protein modification; protein ubiquitination. E3 ubiquitin-protein ligase that cooperates with the microRNAs (miRNAs) machinery and promotes embryonic stem cells proliferation and maintenance. Binds to miRNAs and participates in post-transcriptional repression of transcripts. Required to maintain proliferation and prevent premature differentiation of neural progenitor cells during early neural development. In Danio rerio (Zebrafish), this protein is E3 ubiquitin-protein ligase TRIM71 (trim71).